The following is a 2250-amino-acid chain: RNA1 polyprotein (2250 aa).

Residues 346–371 (SPTVTPSSTPSTSRSSSPEPRVSSPS) are compositionally biased toward low complexity. A disordered region spans residues 346–372 (SPTVTPSSTPSTSRSSSPEPRVSSPSG). In terms of domain architecture, SF3 helicase spans 849 to 1020 (LRDAHNALSR…PHFHEFNLLA (172 aa)). Residues 1225 to 1245 (VALCAVLLVGYLIIKFAIFLF) form a helical membrane-spanning segment. The residue at position 1299 (Ser-1299) is an O-(5'-phospho-RNA)-serine. The 214-residue stretch at 1319–1532 (GPEEEPSQSL…YAQIVTLDDF (214 aa)) folds into the Peptidase C3 domain. Catalysis depends on for picornain 3C-like protease activity residues His-1362, Asp-1400, and Cys-1495. The region spanning 1814 to 1956 (TNWFNGDYSR…SVNDVITEKF (143 aa)) is the RdRp catalytic domain.

This sequence belongs to the comoviridae genome polyprotein B family. Specific enzymatic cleavages by picornain 3C-like protease in vivo yield mature proteins. Picornain 3C-like protease is autocatalytically processed. In terms of processing, viral genome-linked protein (VPg) is uridylylated by the polymerase and is covalently linked to the 5'-end of genomic RNA. This uridylylated form acts as a nucleotide-peptide primer for the polymerase.

It localises to the host membrane. It carries out the reaction RNA(n) + a ribonucleoside 5'-triphosphate = RNA(n+1) + diphosphate. Functionally, picornain 3C-like protease is a thiol protease that probably cleaves the B and M polyproteins. Its function is as follows. Viral genome-linked protein (VPg) plays a role in RNA replication. This is RNA1 polyprotein from Balsamorhiza sagittata (Apple).